A 239-amino-acid polypeptide reads, in one-letter code: Ribosomal RNA small subunit methyltransferase G (239 aa).

S-adenosyl-L-methionine-binding positions include G78, F83, 129-130, and R148; that span reads AE.

The protein belongs to the methyltransferase superfamily. RNA methyltransferase RsmG family.

Its subcellular location is the cytoplasm. Specifically methylates the N7 position of a guanine in 16S rRNA. This is Ribosomal RNA small subunit methyltransferase G from Clostridium botulinum (strain Loch Maree / Type A3).